Consider the following 602-residue polypeptide: Elongation factor 4 (602 aa).

The tr-type G domain maps to 7–189; it reads KYIRNFSIVA…AIVNKVPAPE (183 aa). Residues 19–24 and 136–139 each bind GTP; these read DHGKST and NKID.

The protein belongs to the TRAFAC class translation factor GTPase superfamily. Classic translation factor GTPase family. LepA subfamily.

It localises to the cell membrane. The enzyme catalyses GTP + H2O = GDP + phosphate + H(+). Functionally, required for accurate and efficient protein synthesis under certain stress conditions. May act as a fidelity factor of the translation reaction, by catalyzing a one-codon backward translocation of tRNAs on improperly translocated ribosomes. Back-translocation proceeds from a post-translocation (POST) complex to a pre-translocation (PRE) complex, thus giving elongation factor G a second chance to translocate the tRNAs correctly. Binds to ribosomes in a GTP-dependent manner. This is Elongation factor 4 from Clostridium botulinum (strain Okra / Type B1).